The sequence spans 311 residues: Replication initiation protein (311 aa).

This sequence belongs to the plasmid replication initiation factor family.

Functionally, this protein is probably a specific topoisomerase involved in initiating replication. This protein is specifically required and may be rate-limiting for replication of the plasmid in vivo. In Staphylococcus aureus, this protein is Replication initiation protein (repD).